We begin with the raw amino-acid sequence, 239 residues long: Type II restriction enzyme Eco47II (239 aa).

The catalysed reaction is Endonucleolytic cleavage of DNA to give specific double-stranded fragments with terminal 5'-phosphates.. In terms of biological role, a P subtype restriction enzyme that recognizes the double-stranded sequence 5'-GGNCC-3'; the cleavage site is unknown. This is Type II restriction enzyme Eco47II from Escherichia coli.